The chain runs to 137 residues: Basic phospholipase A2 beta-bungarotoxin A5 chain (137 aa).

A signal peptide spans 1-9 (AVCVSLLGA). Residues 10-17 (ANIPPQHL) constitute a propeptide that is removed on maturation. 6 disulfides stabilise this stretch: cysteine 44–cysteine 136, cysteine 46–cysteine 62, cysteine 61–cysteine 117, cysteine 68–cysteine 110, cysteine 78–cysteine 103, and cysteine 96–cysteine 108. The Ca(2+) site is built by tyrosine 45, glycine 47, and glycine 49. Histidine 65 is an active-site residue. Aspartate 66 contributes to the Ca(2+) binding site. Aspartate 111 is an active-site residue.

This sequence belongs to the phospholipase A2 family. Group I subfamily. D49 sub-subfamily. Heterodimer; disulfide-linked. The A chains have phospholipase A2 activity and the B chains show homology with the basic protease inhibitors. The cofactor is Ca(2+). As to expression, expressed by the venom gland.

The protein localises to the secreted. It catalyses the reaction a 1,2-diacyl-sn-glycero-3-phosphocholine + H2O = a 1-acyl-sn-glycero-3-phosphocholine + a fatty acid + H(+). Functionally, snake venom phospholipase A2 (PLA2) that inhibits neuromuscular transmission by blocking acetylcholine release from the nerve termini. PLA2 catalyzes the calcium-dependent hydrolysis of the 2-acyl groups in 3-sn-phosphoglycerides. The sequence is that of Basic phospholipase A2 beta-bungarotoxin A5 chain from Bungarus multicinctus (Many-banded krait).